Consider the following 132-residue polypeptide: Small ribosomal subunit protein uS8 (132 aa).

This sequence belongs to the universal ribosomal protein uS8 family. In terms of assembly, part of the 30S ribosomal subunit. Contacts proteins S5 and S12.

One of the primary rRNA binding proteins, it binds directly to 16S rRNA central domain where it helps coordinate assembly of the platform of the 30S subunit. The sequence is that of Small ribosomal subunit protein uS8 from Clostridium beijerinckii (strain ATCC 51743 / NCIMB 8052) (Clostridium acetobutylicum).